We begin with the raw amino-acid sequence, 229 residues long: Protein GrpE (229 aa).

Positions 1–89 are disordered; the sequence is MSDFNKDDYL…AEGSSLTPLG (89 aa). Positions 24–36 are enriched in low complexity; that stretch reads ASPDADGADAPSD. Residues 39–50 are compositionally biased toward basic and acidic residues; the sequence is EQLKDDMLKDAA. Residues 65–84 are compositionally biased toward low complexity; it reads KAAAEATADAASDGDAEGSS.

It belongs to the GrpE family. Homodimer.

Its subcellular location is the cytoplasm. Its function is as follows. Participates actively in the response to hyperosmotic and heat shock by preventing the aggregation of stress-denatured proteins, in association with DnaK and GrpE. It is the nucleotide exchange factor for DnaK and may function as a thermosensor. Unfolded proteins bind initially to DnaJ; upon interaction with the DnaJ-bound protein, DnaK hydrolyzes its bound ATP, resulting in the formation of a stable complex. GrpE releases ADP from DnaK; ATP binding to DnaK triggers the release of the substrate protein, thus completing the reaction cycle. Several rounds of ATP-dependent interactions between DnaJ, DnaK and GrpE are required for fully efficient folding. The sequence is that of Protein GrpE from Bifidobacterium animalis subsp. lactis (strain AD011).